Reading from the N-terminus, the 339-residue chain is Fructose-1,6-bisphosphatase class 1 (339 aa).

Residues Glu92, Asp114, Leu116, and Asp117 each coordinate Mg(2+). Substrate contacts are provided by residues 117–120 (DGSS), Asn209, and Lys275. Residue Glu281 participates in Mg(2+) binding.

Belongs to the FBPase class 1 family. In terms of assembly, homotetramer. Requires Mg(2+) as cofactor.

The protein localises to the cytoplasm. The enzyme catalyses beta-D-fructose 1,6-bisphosphate + H2O = beta-D-fructose 6-phosphate + phosphate. It functions in the pathway carbohydrate biosynthesis; gluconeogenesis. This is Fructose-1,6-bisphosphatase class 1 from Acidithiobacillus ferrooxidans (strain ATCC 53993 / BNL-5-31) (Leptospirillum ferrooxidans (ATCC 53993)).